We begin with the raw amino-acid sequence, 189 residues long: Batroxicidin (189 aa).

A signal peptide spans 1–22 (MQGFFWKTWLVVALCGTSSSLA). The propeptide occupies 23–155 (HRPLSYGEAL…DEEKDRPKRV (133 aa)). Disulfide bonds link Cys79–Cys90 and Cys101–Cys118. Positions 125-148 (EEEEEDEEEQKAEVEKDEEKEDEE) are enriched in acidic residues. Residues 125–152 (EEEEEDEEEQKAEVEKDEEKEDEEKDRP) form a disordered region.

It belongs to the cathelicidin family. Expressed by the venom gland.

It localises to the secreted. The protein localises to the target cell membrane. Functionally, potent antimicrobial peptide against Gram-negative (MIC=0.25 ug/ml against E.coli ATCC 25922, MIC=1 ug/ml against P.aeruginosa) and Gram-positive bacteria (MIC=32 ug/ml against E.faecalis, MIC=32 ug/ml against S.aureus). Adopts an amphipathic alpha helical conformation, that may allow to partition into the target membrane. Low hemolytic activities have been observed on mammalian cells. In addition, when tested in vitro on the parasite Trypanosoma cruzi (responsible of the Chagas disease), is able to reduce the number of the three forms (epimastigote, trypomastigote and amastigote) by inducing cell death through necrosis. In Bothrops atrox (Barba amarilla), this protein is Batroxicidin.